We begin with the raw amino-acid sequence, 201 residues long: U1 small nuclear ribonucleoprotein C (201 aa).

The Matrin-type zinc-finger motif lies at 4–36 (YYCEYCDIYLTHSSPVGRRQHNQGRKHISAKIE). Over residues 137-154 (IQKPYNNFDNKNNNYNNK) the composition is skewed to low complexity. The tract at residues 137-176 (IQKPYNNFDNKNNNYNNKPITNSSYKNDKQDYRNNNENND) is disordered.

Belongs to the U1 small nuclear ribonucleoprotein C family. As to quaternary structure, U1 snRNP is composed of the 7 core Sm proteins B/B', D1, D2, D3, E, F and G that assemble in a heptameric protein ring on the Sm site of the small nuclear RNA to form the core snRNP, and at least 3 U1 snRNP-specific proteins U1-70K, U1-A and U1-C. U1-C interacts with U1 snRNA and the 5' splice-site region of the pre-mRNA.

Its subcellular location is the nucleus. In terms of biological role, component of the spliceosomal U1 snRNP, which is essential for recognition of the pre-mRNA 5' splice-site and the subsequent assembly of the spliceosome. U1-C is directly involved in initial 5' splice-site recognition for both constitutive and regulated alternative splicing. The interaction with the 5' splice-site seems to precede base-pairing between the pre-mRNA and the U1 snRNA. Stimulates commitment or early (E) complex formation by stabilizing the base pairing of the 5' end of the U1 snRNA and the 5' splice-site region. In Plasmodium yoelii yoelii, this protein is U1 small nuclear ribonucleoprotein C.